Here is a 123-residue protein sequence, read N- to C-terminus: Small ribosomal subunit protein uS12cz/uS12cy (123 aa).

This sequence belongs to the universal ribosomal protein uS12 family. Part of the 30S ribosomal subunit.

The protein localises to the plastid. It localises to the chloroplast. Functionally, with S4 and S5 plays an important role in translational accuracy. Located at the interface of the 30S and 50S subunits. The protein is Small ribosomal subunit protein uS12cz/uS12cy (rps12-A) of Citrus sinensis (Sweet orange).